The following is a 426-amino-acid chain: Probable indole-3-pyruvate monooxygenase YUCCA8 (426 aa).

29–34 (GAGPSG) contributes to the FAD binding site. 199-204 (GCGNSG) contributes to the NADP(+) binding site.

Belongs to the FMO family. FAD is required as a cofactor. In terms of tissue distribution, expressed in root tips and in hydathodes. Expressed in root vasculature and quiescent center, but not in the meristematic zone of the root tip.

It carries out the reaction indole-3-pyruvate + NADPH + O2 + H(+) = (indol-3-yl)acetate + CO2 + NADP(+) + H2O. The protein operates within plant hormone metabolism; auxin biosynthesis. Its function is as follows. Involved in auxin biosynthesis. Belongs to the set of redundant YUCCA genes probably responsible for auxin biosynthesis in roots. This is Probable indole-3-pyruvate monooxygenase YUCCA8 (YUC8) from Arabidopsis thaliana (Mouse-ear cress).